Reading from the N-terminus, the 3767-residue chain is MQAGISIFFLFLHIPIFFVNCSNSTSCVAREEFQCKMDDSCISMKKWQDGVDDCYDGSDEVCLPWQFDCQFGSPRCISKNKLHDKKIDCYSGFDEGCPAHYFVCRDRSACIEPSKYLNGVADCKDKSDEPCAQNQFQCSDGTKCIPKAQFQDGKEDCDDGSDEECTTSQFACQCGTIKCVSDTFIMDGNWDCEDGSDEFINKTLTANCTRNNKVNIATNSLSLGKLKFCSGKNPCKPELGQVCVIIGGTWRCVCKLGTFRPLGSDKCIPIELLTRYRNAPSSKCSNSHEEQFGLLQGFQKSLSSRKELERWSNIRRAPPRTLSGTTPSGSDGFLKSGAEQVPFMFQEDKNYVSVIPDEIIDSYGTIMTPPEFHFNRDDIRCGNKTCGLHESCQKNSESKYECICREGFTIFEGTCRELIDECAQGKHDCHPEARCVDALIGYECLCREGYLDTSIDPKARPGRKCRKLINECTNALMNDCSQNARCLDKPIGYTCRCQDDYVDVSREGARKPGRNCTQAINECASNLHNCDTHAICQDQPVGYSCRCPFGFIDSSPTALEPGRKCVQANNEAATTSTTTSQCIKEKNGETVCKCLLGYKNVGTKTHLNCQMEKRANPCQDYSLHDCDPVAECFSEQPGYFQCQCPKGFTDSSADKRFPGRKCVRAVDECALGRHTCDPHADCIDTHQGYTCKCRSGWSDTSLDPLRSPGRSCKKADMCSNIDCAAEAECRETPIGPMCQCVSGYVDVSRQHGRPAGRVCRAVVNECAEGRHDCSSHATCIDTADGFTCRCKDSYRDESSDTLKHPGKNCVRTVQPDPPECDVSDPMSCDPAKREVCIFVENTYKCRCANGYSRLPDGRCVVINECAEPRLNTCGKNAECIDLAEGYTCQCRSGYADISPVSQPGRICRARVNECSNKEKYNVDCSENAICADTEHSYSCRCRPGFADVSAAFNKLPGRRCIEAVNECASPSLNDCSKNAFCEDAKEGYICTCRPGYVDNSPNAARHPGRICTKPVEKIKTDLKDTSFSTDDGCDPKNPKCGANEACVQRHGQHNCECVETAFRYTDGSCRVYSACSKRNTCDKNAICLNRFDSYTCQCRPGYIDLSADLTNAPGRICKELINECASSDNECSPYARCIDATNGYACQCLDGFIDVSSRYNKPPGRQCTNSNNECSEKSLNTCDENADCVDTPDGYTCQCYGGFVDVSSNANLPPGRVCTVQTTCPKQKTDLVFLIDGSGSIGSYVFKNEVLRFVREFVELFEIGRSKTRVGLIQYSDQIRHEFDLDQYGDRDSLLKGISETQYLTGLTRTGAAIQHMVQEGFSERRGARPQQSDIARVAIILTDGRSQDNVTGPADSARKLSINTFAIGVTDHVLASELESIAGSPNRWFYVDKFKDLDTRLRSMIQKAACPSPTKQETPSEDVCNPRTQTGCDRSLNEHCAVENGRPRCVCPEGFTRHPFTRVCGGDLCNPQLITSCIFPEECQITPYKNFRCSCPEGYNRDYRSGFCVSVKEVQISPQHDANCHNGGVRCSENERCTNDGSDWFCECLPGFERIRNGQCAYPGSCNPNDPMSCDVRKRQQCLPRGNIYTCQCGRNEKRHPITDICLKNECLTGEHDCDRSARCIDTDESYICACQSGFIDHSPNPSERPGRVCVALQNECLDGSNRCSPNALCTDTEEGYVCRCKSGFVDYSPNPQTFPGMVCKELVNECTNPRLNQCDRNAHCIDTIEGYSCICKPGFVDMDEFGNPGRRCEQIKTNDKCSPGKNDCDRNARCIQIGDDDYSCACPPGFKDKSPSSSRPGRLCIPVIPECDNPTLNDCDSPDRAVCTDTDDGYMCRCRQGFLDISPSISVKPGRLCKPLQNECALGIDDCARDGGICEDNPDSFTCRCAMNYLDVSFDRVTRPGRKCKRLINECQTGQNDCSEEATCTDTEDSYICACPQSHIDLSPDTVNRPGRRCLMRINECTSNRHDCSPNADCIDTPESYKCRCRDDFVDESPDSSRRPGRICRPALVDECRTGKHDCHVNAICQDLPQGYTCQCSADFVDVSPHRASHPGRLCQPRPTPPPPECRLDGGNQCKVHLNEVCRLMGGEPKCSCPVNYQRDSSGSCSIINECLFTQLNDCHTAADCIDQVQGYTCQCRDGFKDIGDRRRPGRMCKPMVNECQYPHLNDCHQNAACIDLEEGYECKCNQGFMDHSHGRPGRICKQLTNECLRPSLNSCDRNARCIDKEEGYECECRDGFIDVSPSPTLKGRACRELVNECANSRLNDCDKNARCKDTMDSYECDCPVNSKDISPSPSFPGRVCLMFINECESGVHDCDPSATCRDNEQSFTCECPSGFVDRSPNKHARPGRVCVKLVDECREGRHTCSSHADCRDLEEGYTCECRDGYVDRSPNLASQPGRVCSAPEVCPPNHDCSSAAVCEPLGGMKYQCVCIQGYVDQSPGSQKGRVCVRNNACHDPRLNTCSRNAICYDEPRGYRCECKRGFMDRSPDSSQRGRVCEPPPPPSPPPRHPCQDPERNDCHPAGTCRATGAQSYTCECLSGYADRSPDPRNKPGRLCVLTEPVCLDPEQNDCHAAAICSEVNGPEKYTCKCRDGYTDESPDPLRRPGRICKGLINECLDRSLNDCHSLAVCKDLPNGYTCQCPINAKDQSPDPRKPGRICSLSVNECANPSLNSCSAFADCFDEENGYRCRCRNGYHDDDPAHPGHRCSFMINECDSSNLNDCDRNANCIDTAGGYDCACKAPYRDEGPPQSPGRICRLNECLNPNRNTCDRNADCRDLDYGYTCTCRHGFYDQSPNPQEPGRICIEFQQEEHIERVKVTTVQSEPRREFPCGRDDCIKARGEVCISGEYCGCKPGEGRSASTGKCQEVQETPFELRVVTRDQRPLMYSTEFGSQKSPSYVEIVELFEKNMARTFGGTSLAPRYVNTKVDYITHPKTKNSSWDQGLLFKYEVQTTKSQSQPIDECELWKQMQASLDRTNGAIGGGSLRVASDTDLLNPCKQQEEWGNCGGMSCKEHLKEVCIAGHICGCPDGMKRRDANSECRVVESWNVPLWVVRDKEKPIVFSESFDNPQTPVYKDYSKRLEKGIEGCYPHTELKNAFVTAEVNDIVNPVLMNASYDTGLLFNTTVHFRKGMVHVPSDAYYQLIKYVTKENNNEVGDSELYLNPTQPDPFNPCFKNDCDPHGKCIEISKYAYKCECGVGYRDINPQSPGKKCLPVHGFNECERKEDNECSENARCIDLEHLYKCECLPSYYDTSPVGSVPGSLCVLDYCSDVNFCPTNTTCKNMEQQAECKCDAGFMDIRKSEKRTALMLGDDTLCMHVRDVDECALGLNNCSGVAHCIDRAVGYTCKCPDGYIDGNPDEPGRVCGALLCDLCNAHGDCVHNTATNNITCVCTDGWTGPQCQVAPSNASLVLLILLALLFLLLTLCCLLYFCTKCHCFKGRRFAGAGANGFGYRRGGAWPWSTLEGSASSESGAEFSAMSAAGNDYYPDIGIPRAKLKSGMMASGNTAEVRNMEVARLDQYLDENAVRIPRAHLVDAHGDTSFDSLSEASSEYTIKEEIERKVITDVTTKEIKTTTTTDEQGNTIVTTTEAVHPRDTTIVHGGGYTQNESSSSSFSGGERAYQSQSQQQQSMSQGMSQSMSQHATSAGYSSSGMESSAHNSGYASIRHTGERERGGSEEEFSIGRARGMAAASSGYQHSSSENREVEEYCSEEEDVEHSVGDKRTIVTKNHSYEPFVNGESERFKTEVVTSQTSTHVTKK.

The first 24 residues, 1-24, serve as a signal peptide directing secretion; it reads MQAGISIFFLFLHIPIFFVNCSNS. Over 25–3417 the chain is Extracellular; sequence TSCVAREEFQ…CQVAPSNASL (3393 aa). In terms of domain architecture, LDL-receptor class A 1 spans 26–63; it reads SCVAREEFQCKMDDSCISMKKWQDGVDDCYDGSDEVCL. Disulfide bonds link Cys27–Cys41, Cys35–Cys54, Cys62–Cys76, Cys69–Cys89, Cys97–Cys110, Cys104–Cys123, Cys131–Cys144, Cys138–Cys157, Cys165–Cys179, and Cys172–Cys192. LDL-receptor class A domains follow at residues 96 to 132, 133 to 166, and 167 to 209; these read GCPA…EPCA, QNQF…EECT, and TSQF…ANCT. N-linked (GlcNAc...) asparagine glycans are attached at residues Asn201 and Asn207. EGF-like domains follow at residues 225 to 268, 375 to 416, 418 to 466, 468 to 517, 519 to 566, 614 to 663, 665 to 713, 714 to 760, 762 to 810, 816 to 860, 861 to 908, 910 to 961, 963 to 1012, 1029 to 1070, 1071 to 1118, 1120 to 1168, and 1170 to 1219; these read KLKF…DKCI, NRDD…GTCR, LIDE…RKCR, LINE…RNCT, AINE…RKCV, RANP…RKCV, AVDE…RSCK, KADM…RVCR, VVNE…KNCV, DPPE…GRCV, VINE…RICR, RVNE…RRCI, AVNE…RICT, TDDG…GSCR, VYSA…RICK, LINE…RQCT, and SNNE…RVCT. 51 cysteine pairs are disulfide-bonded: Cys229-Cys243, Cys235-Cys252, Cys254-Cys267, Cys381-Cys392, Cys386-Cys402, Cys404-Cys415, Cys422-Cys435, Cys429-Cys444, Cys446-Cys465, Cys472-Cys486, Cys480-Cys495, Cys497-Cys516, Cys523-Cys536, Cys530-Cys545, Cys547-Cys565, Cys618-Cys632, Cys626-Cys642, Cys644-Cys662, Cys669-Cys682, Cys676-Cys691, Cys693-Cys712, Cys718-Cys729, Cys723-Cys738, Cys740-Cys759, Cys766-Cys779, Cys773-Cys788, Cys790-Cys809, Cys820-Cys836, Cys828-Cys845, Cys847-Cys859, Cys865-Cys879, Cys873-Cys888, Cys890-Cys907, Cys914-Cys930, Cys924-Cys939, Cys941-Cys960, Cys967-Cys981, Cys975-Cys990, Cys992-Cys1011, Cys1033-Cys1046, Cys1040-Cys1055, Cys1057-Cys1069, Cys1075-Cys1087, Cys1081-Cys1096, Cys1098-Cys1117, Cys1124-Cys1137, Cys1131-Cys1146, Cys1148-Cys1167, Cys1174-Cys1188, Cys1182-Cys1197, and Cys1199-Cys1218. Asn383 is a glycosylation site (N-linked (GlcNAc...) asparagine). An N-linked (GlcNAc...) asparagine glycan is attached at Asn515. Residues 1230-1406 form the VWFA domain; that stretch reads DLVFLIDGSG…DLDTRLRSMI (177 aa). An N-linked (GlcNAc...) asparagine glycan is attached at Asn1350. 29 EGF-like domains span residues 1421–1466, 1466–1510, 1521–1562, 1563–1608, 1608–1656, 1658–1706, 1708–1755, 1759–1807, 1809–1860, 1862–1911, 1913–1961, 1963–2011, 2014–2062, 2068–2112, 2113–2160, 2162–2208, 2210–2258, 2260–2308, 2310–2358, 2360–2408, 2409–2455, 2456–2504, 2513–2563, 2565–2616, 2618–2666, 2668–2714, 2716–2763, 2763–2811, and 2833–2872; these read SEDV…RVCG, GGDL…GFCV, HDAN…GQCA, YPGS…DICL, LKNE…RVCV, LQNE…MVCK, LVNE…RRCE, TNDK…RLCI, VIPE…RLCK, LQNE…RKCK, LINE…RRCL, RINE…RICR, LVDE…RLCQ, PPPE…GSCS, IINE…RMCK, MVNE…RICK, LTNE…RACR, LVNE…RVCL, FINE…RVCV, LVDE…RVCS, APEV…RVCV, RNNA…RVCE, PRHP…RLCV, TEPV…RICK, LINE…RICS, SVNE…HRCS, MINE…RICR, RLNE…RICI, and REFP…GKCQ. Disulfide bonds link Cys1425–Cys1441, Cys1433–Cys1450, Cys1452–Cys1465, Cys1470–Cys1484, Cys1478–Cys1494, Cys1496–Cys1509, Cys1525–Cys1538, Cys1532–Cys1547, Cys1549–Cys1561, Cys1567–Cys1583, Cys1575–Cys1592, Cys1594–Cys1607, Cys1612–Cys1625, Cys1619–Cys1634, Cys1636–Cys1655, Cys1662–Cys1675, Cys1669–Cys1684, Cys1686–Cys1705, Cys1712–Cys1726, Cys1720–Cys1735, Cys1737–Cys1754, Cys1763–Cys1776, Cys1770–Cys1786, Cys1788–Cys1806, Cys1813–Cys1829, Cys1821–Cys1838, Cys1840–Cys1859, Cys1866–Cys1880, Cys1873–Cys1889, Cys1891–Cys1910, Cys1917–Cys1930, Cys1924–Cys1939, Cys1941–Cys1960, Cys1967–Cys1980, Cys1974–Cys1989, Cys1991–Cys2010, Cys2018–Cys2031, Cys2025–Cys2040, Cys2042–Cys2061, Cys2072–Cys2088, Cys2080–Cys2097, Cys2099–Cys2111, Cys2117–Cys2131, Cys2125–Cys2140, Cys2142–Cys2159, Cys2166–Cys2180, Cys2174–Cys2189, Cys2191–Cys2207, Cys2214–Cys2228, Cys2222–Cys2237, Cys2239–Cys2257, Cys2264–Cys2278, Cys2272–Cys2287, Cys2289–Cys2307, Cys2314–Cys2327, Cys2321–Cys2336, Cys2338–Cys2357, Cys2364–Cys2377, Cys2371–Cys2386, Cys2388–Cys2407, Cys2413–Cys2425, Cys2419–Cys2435, Cys2437–Cys2454, Cys2460–Cys2474, Cys2468–Cys2483, and Cys2485–Cys2503. The disordered stretch occupies residues 2492-2521; sequence RSPDSSQRGRVCEPPPPPSPPPRHPCQDPE. Residues 2504–2515 are compositionally biased toward pro residues; that stretch reads EPPPPPSPPPRH. Disulfide bonds link Cys2517–Cys2531, Cys2525–Cys2541, Cys2543–Cys2562, Cys2569–Cys2583, Cys2577–Cys2594, Cys2596–Cys2615, Cys2622–Cys2636, Cys2630–Cys2645, Cys2647–Cys2665, Cys2672–Cys2686, Cys2680–Cys2695, Cys2697–Cys2713, Cys2720–Cys2734, Cys2728–Cys2743, Cys2745–Cys2762, Cys2767–Cys2781, Cys2775–Cys2790, Cys2792–Cys2810, Cys2837–Cys2850, Cys2842–Cys2856, and Cys2858–Cys2871. The SEA 1 domain occupies 2873–2999; it reads EVQETPFELR…GSLRVASDTD (127 aa). Asn2944 is a glycosylation site (N-linked (GlcNAc...) asparagine). The EGF-like 47 domain occupies 3009-3048; it reads EWGNCGGMSCKEHLKEVCIAGHICGCPDGMKRRDANSECR. Cystine bridges form between Cys3013-Cys3026, Cys3018-Cys3032, and Cys3034-Cys3047. The SEA 2 domain occupies 3049 to 3174; the sequence is VVESWNVPLW…SELYLNPTQP (126 aa). Residues Asn3120 and Asn3130 are each glycosylated (N-linked (GlcNAc...) asparagine). EGF-like domains follow at residues 3176 to 3220, 3224 to 3272, and 3272 to 3324; these read PFNP…KKCL, GFNE…SLCV, and VLDY…TLCM. 15 cysteine pairs are disulfide-bonded: Cys3180/Cys3191, Cys3185/Cys3201, Cys3203/Cys3219, Cys3228/Cys3242, Cys3236/Cys3251, Cys3253/Cys3271, Cys3276/Cys3288, Cys3282/Cys3297, Cys3299/Cys3323, Cys3332/Cys3345, Cys3339/Cys3354, Cys3356/Cys3372, Cys3377/Cys3386, Cys3380/Cys3397, and Cys3399/Cys3408. Residue Asn3285 is glycosylated (N-linked (GlcNAc...) asparagine). The 46-residue stretch at 3328–3373 folds into the EGF-like 51; calcium-binding domain; that stretch reads DVDECALGLNNCSGVAHCIDRAVGYTCKCPDGYIDGNPDEPGRVCG. N-linked (GlcNAc...) asparagine; atypical glycosylation occurs at Asn3337. N-linked (GlcNAc...) asparagine glycosylation occurs at Asn3338. Residues 3373–3409 form the EGF-like 52 domain; the sequence is GALLCDLCNAHGDCVHNTATNNITCVCTDGWTGPQCQ. Asn3394 carries N-linked (GlcNAc...) asparagine glycosylation. Asn3414 is a glycosylation site (N-linked (GlcNAc...) asparagine). A helical membrane pass occupies residues 3418-3438; sequence VLLILLALLFLLLTLCCLLYF. At 3439-3767 the chain is on the cytoplasmic side; it reads CTKCHCFKGR…SQTSTHVTKK (329 aa). The tract at residues 3582–3729 is disordered; sequence TTTTDEQGNT…EEDVEHSVGD (148 aa). Polar residues predominate over residues 3588–3597; the sequence is QGNTIVTTTE. Low complexity predominate over residues 3630–3665; the sequence is QSQSQQQQSMSQGMSQSMSQHATSAGYSSSGMESSA. Basic and acidic residues predominate over residues 3675–3684; that stretch reads HTGERERGGS. Residues 3690–3702 show a composition bias toward low complexity; that stretch reads IGRARGMAAASSG.

In terms of tissue distribution, expressed in the hypodermis at the sites of muscle contact, in striated muscles including body wall muscles, the anal sphincter muscles and the junctions between the anal sphincter muscle and rectal cuticle. Also expressed in non-muscle cells including the excretory duct cell and pore cells.

Its subcellular location is the cell membrane. It is found in the cell junction. The protein resides in the hemidesmosome. In terms of biological role, involved in cell adhesion and required for organ positioning and attachment. At the hypodermal surface, required for attachment of the hypdermermis to the basal cuticle in postembryonic development, possibly through intermediate filaments of the cytoskeleton. The polypeptide is Transmembrane cell adhesion receptor mua-3 (Caenorhabditis elegans).